The sequence spans 457 residues: Non-structural protein V (457 aa).

Disordered stretches follow at residues 26–104 (KTYG…DPDD) and 193–403 (FVPK…MPIK). Polar residues-rich tracts occupy residues 28–37 (YGRSSIQQPS) and 77–96 (DLSSVTSSDGTIGQRVSNTR). Over residues 240 to 252 (SDDEDENQLEYED) the composition is skewed to acidic residues. The residue at position 257 (serine 257) is a Phosphoserine; by host. Residues 296 to 317 (FPEKEETPDVRRKDSLMQDSCK) are compositionally biased toward basic and acidic residues. The residue at position 350 (serine 350) is a Phosphoserine; by host. Zn(2+) contacts are provided by histidine 406, cysteine 425, cysteine 429, cysteine 441, cysteine 443, cysteine 446, cysteine 450, and cysteine 453.

Belongs to the paramyxoviruses V protein family. In terms of assembly, interacts with host IFIH1/MDA5, DHX58/LGP2, STAT1 and STAT2.

It localises to the host cytoplasm. Plays an essential role in the inhibition of host immune response. Prevents the establishment of cellular antiviral state by blocking interferon-alpha/beta (IFN-alpha/beta) production and signaling pathway. Interacts with host IFIH1/MDA5 and DHX58/LGP2 to inhibit the transduction pathway involved in the activation of IFN-beta promoter, thus protecting the virus against cell antiviral state. Blocks the type I interferon signaling pathway by interacting with host STAT1 and STAT2 and thereby inhibiting their phosphorylation and subsequent nuclear translocation. Efficiently blocks the type II interferon signaling pathway. In Hendra virus (isolate Horse/Autralia/Hendra/1994), this protein is Non-structural protein V (P/V/C).